The primary structure comprises 250 residues: MVKIEVGSVGDSFSVSSLKAYLSEFIATLLFVFAGVGSAVAFAKLTSDGALDPAGLVAIAIAHAFALFVGVSIAANISGGHLNPAVTLGLAIGGNITLITGFFYWIAQCLGSIVACLLLVFVTNGKSVPTHGVSAGLGAVEGVVMEIVVTFALVYTVYATAADPKKGSLGTIAPIAIGFIVGANILAAGPFSGGSMNPARSFGPAVVSGDLSQIWIYWVGPLVGGALAGLIYGDVFIGSYEAVETREIRV.

Position 1 is an N-acetylmethionine (Met1). Residues 1 to 24 (MVKIEVGSVGDSFSVSSLKAYLSE) lie on the Cytoplasmic side of the membrane. Lys3 carries the post-translational modification N6,N6-dimethyllysine. The helical transmembrane segment at 25–45 (FIATLLFVFAGVGSAVAFAKL) threads the bilayer. Topologically, residues 46–54 (TSDGALDPA) are vacuolar. A helical membrane pass occupies residues 55-75 (GLVAIAIAHAFALFVGVSIAA). Topologically, residues 76–101 (NISGGHLNPAVTLGLAIGGNITLITG) are cytoplasmic. Residues 83–85 (NPA) carry the NPA 1 motif. A helical transmembrane segment spans residues 102 to 122 (FFYWIAQCLGSIVACLLLVFV). Residues 123-134 (TNGKSVPTHGVS) are Vacuolar-facing. The helical transmembrane segment at 135-155 (AGLGAVEGVVMEIVVTFALVY) threads the bilayer. The Cytoplasmic portion of the chain corresponds to 156-168 (TVYATAADPKKGS). Residues 169–189 (LGTIAPIAIGFIVGANILAAG) form a helical membrane-spanning segment. At 190-217 (PFSGGSMNPARSFGPAVVSGDLSQIWIY) the chain is on the vacuolar side. The short motif at 197-199 (NPA) is the NPA 2 element. A helical transmembrane segment spans residues 218-238 (WVGPLVGGALAGLIYGDVFIG). At 239–250 (SYEAVETREIRV) the chain is on the cytoplasmic side.

Belongs to the MIP/aquaporin (TC 1.A.8) family. TIP (TC 1.A.8.10) subfamily. As to quaternary structure, interacts with cucumber mosaic virus (CMV) Protein 1a. Widely expressed.

Its subcellular location is the vacuole membrane. In terms of biological role, transports methylammonium or ammonium in yeast cells, preferentially at high medium pH. May participate in vacuolar compartmentation and detoxification of ammonium. This chain is Aquaporin TIP2-3 (TIP2-3), found in Arabidopsis thaliana (Mouse-ear cress).